Reading from the N-terminus, the 362-residue chain is Aminomethyltransferase (362 aa).

Belongs to the GcvT family. In terms of assembly, the glycine cleavage system is composed of four proteins: P, T, L and H.

The catalysed reaction is N(6)-[(R)-S(8)-aminomethyldihydrolipoyl]-L-lysyl-[protein] + (6S)-5,6,7,8-tetrahydrofolate = N(6)-[(R)-dihydrolipoyl]-L-lysyl-[protein] + (6R)-5,10-methylene-5,6,7,8-tetrahydrofolate + NH4(+). Its function is as follows. The glycine cleavage system catalyzes the degradation of glycine. This chain is Aminomethyltransferase, found in Bacillus subtilis (strain 168).